Reading from the N-terminus, the 169-residue chain is ATP synthase subunit b (169 aa).

The chain crosses the membrane as a helical span at residues 3–23 (IKILLLVLPFFAFASEHGGVN).

Belongs to the ATPase B chain family. As to quaternary structure, F-type ATPases have 2 components, F(1) - the catalytic core - and F(0) - the membrane proton channel. F(1) has five subunits: alpha(3), beta(3), gamma(1), delta(1), epsilon(1). F(0) has three main subunits: a(1), b(2) and c(10-14). The alpha and beta chains form an alternating ring which encloses part of the gamma chain. F(1) is attached to F(0) by a central stalk formed by the gamma and epsilon chains, while a peripheral stalk is formed by the delta and b chains.

Its subcellular location is the cell inner membrane. Functionally, f(1)F(0) ATP synthase produces ATP from ADP in the presence of a proton or sodium gradient. F-type ATPases consist of two structural domains, F(1) containing the extramembraneous catalytic core and F(0) containing the membrane proton channel, linked together by a central stalk and a peripheral stalk. During catalysis, ATP synthesis in the catalytic domain of F(1) is coupled via a rotary mechanism of the central stalk subunits to proton translocation. In terms of biological role, component of the F(0) channel, it forms part of the peripheral stalk, linking F(1) to F(0). This is ATP synthase subunit b from Campylobacter curvus (strain 525.92).